A 396-amino-acid chain; its full sequence is 3-hydroxykynurenine transaminase (396 aa).

The interval 43 to 44 (SN) is binds to and confers specificity for 3-hydroxykynurenine; shared with dimeric partner. Residues 77 to 79 (SAH), S154, and Q204 contribute to the pyridoxal 5'-phosphate site. Residue S154 coordinates substrate. K205 carries the N6-(pyridoxal phosphate)lysine modification. Residues Y256 and T259 each contribute to the pyridoxal 5'-phosphate site. R356 serves as a coordination point for substrate.

The protein belongs to the class-V pyridoxal-phosphate-dependent aminotransferase family. As to quaternary structure, homodimer. The cofactor is pyridoxal 5'-phosphate. Expressed in gut and ovaries.

The protein localises to the peroxisome. It carries out the reaction L-kynurenine + glyoxylate = kynurenate + glycine + H2O. The catalysed reaction is 3-hydroxy-L-kynurenine + glyoxylate = xanthurenate + glycine + H2O. The enzyme catalyses 3-hydroxy-L-kynurenine + pyruvate = xanthurenate + L-alanine + H2O. It catalyses the reaction glyoxylate + L-alanine = glycine + pyruvate. The protein operates within amino-acid degradation; L-kynurenine degradation; kynurenate from L-kynurenine: step 1/2. Its function is as follows. Catalyzes the pyridoxal 5'-phosphate-dependent transamination of both 3-hydroxykynurenine and L-kynurenine to xanthurenic acid and kynurenic acid, respectively, preferentially using the alpha-ketoacid glyoxylate as the amino group acceptor. Although glyoxylate is the preferred amino group acceptor, transamination of 3-hydroxykynurenine also works with pyruvate as the amino acceptor in vitro. Involved in the detoxification of cytotoxic metabolite 3-hydroxykynurenine generated by the hydroxylation of L-kynurenine, an intermediate in the tryptophan catabolism pathway. The Plasmodium parasite uses xanthurenic acid produced in the midgut to activate its gametocytes ingested during a blood meal. Also catalyzes, although with a lesser efficiency, the transamination of alanine with glyoxylate as an amino group acceptor. May play a role in the detoxification of glyoxylate, a toxic plant metabolite from the diet. The polypeptide is 3-hydroxykynurenine transaminase (Anopheles gambiae (African malaria mosquito)).